The primary structure comprises 742 residues: Glucosylceramidase (742 aa).

N-linked (GlcNAc...) asparagine glycosylation is found at Asn-37 and Asn-160. Glu-258 functions as the Proton donor in the catalytic mechanism. A glycan (N-linked (GlcNAc...) asparagine) is linked at Asn-388. Glu-492 acts as the Nucleophile in catalysis. Asn-552, Asn-560, and Asn-698 each carry an N-linked (GlcNAc...) asparagine glycan. A helical membrane pass occupies residues 701 to 721 (IAQILVAVVILLLGVLVAYYA).

Belongs to the glycosyl hydrolase 5 (cellulase A) family.

It localises to the membrane. It catalyses the reaction a beta-D-glucosyl-(1&lt;-&gt;1')-N-acylsphing-4-enine + H2O = an N-acylsphing-4-enine + D-glucose. Its function is as follows. Specifically hydrolyzes the glucosidic linkage in glucosylceramide. May prevent accumulation of aberrent glucosylceramide containing immature ceramide. The protein is Glucosylceramidase of Cryptococcus neoformans var. grubii serotype A (strain H99 / ATCC 208821 / CBS 10515 / FGSC 9487) (Filobasidiella neoformans var. grubii).